Consider the following 370-residue polypeptide: 3-dehydroquinate synthase (370 aa).

Residues 108–112 (GVIGD), 132–133 (TT), K145, and K154 contribute to the NAD(+) site. 3 residues coordinate Zn(2+): E187, H249, and H267.

The protein belongs to the sugar phosphate cyclases superfamily. Dehydroquinate synthase family. Co(2+) is required as a cofactor. Requires Zn(2+) as cofactor. NAD(+) serves as cofactor.

The protein resides in the cytoplasm. The catalysed reaction is 7-phospho-2-dehydro-3-deoxy-D-arabino-heptonate = 3-dehydroquinate + phosphate. Its pathway is metabolic intermediate biosynthesis; chorismate biosynthesis; chorismate from D-erythrose 4-phosphate and phosphoenolpyruvate: step 2/7. Functionally, catalyzes the conversion of 3-deoxy-D-arabino-heptulosonate 7-phosphate (DAHP) to dehydroquinate (DHQ). This is 3-dehydroquinate synthase from Cereibacter sphaeroides (strain KD131 / KCTC 12085) (Rhodobacter sphaeroides).